The chain runs to 269 residues: Leucinostatins biosynthesis cluster protein T (269 aa).

Residues 1–15 (MHIILTGTGLVGAIA) form the signal peptide. A glycan (N-linked (GlcNAc...) asparagine) is linked at asparagine 254.

In terms of biological role, part of the gene cluster that mediates the biosynthesis of the lipopeptide antibiotics leucinostatins that show extensive biological activities, including antimalarial, antiviral, antibacterial, antifungal, and antitumor activities, as well as phytotoxic. The function of lcsT within the leucinostatins biosynthesis has not been identified yet. In Purpureocillium lilacinum (Paecilomyces lilacinus), this protein is Leucinostatins biosynthesis cluster protein T.